The primary structure comprises 513 residues: ATP synthase subunit alpha (513 aa).

ATP is bound at residue 170–177 (GDRQTGKT).

Belongs to the ATPase alpha/beta chains family. In terms of assembly, F-type ATPases have 2 components, CF(1) - the catalytic core - and CF(0) - the membrane proton channel. CF(1) has five subunits: alpha(3), beta(3), gamma(1), delta(1), epsilon(1). CF(0) has four main subunits: a(1), b(1), b'(1) and c(9-12).

Its subcellular location is the cell inner membrane. The enzyme catalyses ATP + H2O + 4 H(+)(in) = ADP + phosphate + 5 H(+)(out). Produces ATP from ADP in the presence of a proton gradient across the membrane. The alpha chain is a regulatory subunit. The protein is ATP synthase subunit alpha of Gloeobacter violaceus (strain ATCC 29082 / PCC 7421).